The chain runs to 484 residues: MGSNDLINEAYDDSEVVGEERESKSAWMKRWYQLLTSPLDLQLVINEKLEMINWDAYAKSLAKPLGNFLTILFFIIRLLQDNLIKPNYYKLNVKSGAFDLSKSNKLKEFDYLWEISSSFQNSNQFYAFQSWYFVTLRFLNNLFRFTIFILLSLNLYVSCKFMFGYFKTYNLFHLKKEFNSPNLTKHNLKDLSKEYYEDIYKQSLWSMLKHFFRGSRDDGPHVNQNEVEIFFQLRKWIPTNFIINLFVSFSPTAIVFLSFSDVSFTSAIAIVFHQYILDYIITKRFQRSVDDDLILSSAALQEYEDKHIMARINQCSNIDTLSSAMGTRSKTPRIFTTHSLCGEEIREVYNYEKREFEALPKMTESVPGSRETRIKDYGGISQVSDNQSHPIGFHYSPRMSPYYRDKVLDNNLAQSSSNENLEKGGAFLPNQDQNRPSKSLSPLRKTPLSARQKRFEGSEFNVLNKNDINSILRSPKKKKNYHKR.

Residue Ser3 is modified to Phosphoserine. 2 helical membrane passes run 145 to 165 (FTIF…MFGY) and 237 to 257 (IPTN…IVFL). The disordered stretch occupies residues 416-457 (SSNENLEKGGAFLPNQDQNRPSKSLSPLRKTPLSARQKRFEG). Ser417 carries the phosphoserine modification. The segment covering 430 to 440 (NQDQNRPSKSL) has biased composition (polar residues). Position 474 is a phosphoserine (Ser474).

It belongs to the NUR1 family. In terms of assembly, interacts with CSM1.

It is found in the nucleus membrane. In terms of biological role, member of a perinuclear network that controls recombination at multiple loci to maintain genome stability. Required for rDNA repeat stability. The polypeptide is Nuclear rim protein 1 (NUR1) (Saccharomyces cerevisiae (strain JAY291) (Baker's yeast)).